The primary structure comprises 130 residues: Histone H2A.2 (130 aa).

An N6-acetyllysine mark is found at K4 and K6. Q104 carries the N5-methylglutamine modification. A Glycyl lysine isopeptide (Lys-Gly) (interchain with G-Cter in SUMO) cross-link involves residue K125. S127 carries the phosphoserine modification. A [ST]-Q motif motif is present at residues 127–128 (SQ).

The protein belongs to the histone H2A family. The nucleosome is a histone octamer containing two molecules each of H2A, H2B, H3 and H4 assembled in one H3-H4 heterotetramer and two H2A-H2B heterodimers. The octamer wraps approximately 147 bp of DNA. In terms of processing, phosphorylated to form H2AS128ph (gamma-H2A) in response to DNA double-strand breaks (DSBs) generated by exogenous genotoxic agents and by stalled replication forks. Phosphorylation is dependent on the DNA damage checkpoint kinases MEC1/ATR and TEL1/ATM, spreads on either side of a detected DSB site and may mark the surrounding chromatin for recruitment of proteins required for DNA damage signaling and repair. Gamma-H2A is removed from the DNA prior to the strand invasion-primer extension step of the repair process and subsequently dephosphorylated. Dephosphorylation is necessary for efficient recovery from the DNA damage checkpoint. Post-translationally, acetylated by ESA1 to form H2AK4ac and H2AK7ac.

It is found in the nucleus. The protein localises to the chromosome. Functionally, core component of nucleosome which plays a central role in DNA double strand break (DSB) repair. Nucleosomes wrap and compact DNA into chromatin, limiting DNA accessibility to the cellular machineries which require DNA as a template. Histones thereby play a central role in transcription regulation, DNA repair, DNA replication and chromosomal stability. DNA accessibility is regulated via a complex set of post-translational modifications of histones, also called histone code, and nucleosome remodeling. The polypeptide is Histone H2A.2 (HTA2) (Meyerozyma guilliermondii (strain ATCC 6260 / CBS 566 / DSM 6381 / JCM 1539 / NBRC 10279 / NRRL Y-324) (Yeast)).